Reading from the N-terminus, the 108-residue chain is UPF0102 protein Sfri_0388 (108 aa).

Belongs to the UPF0102 family.

The sequence is that of UPF0102 protein Sfri_0388 from Shewanella frigidimarina (strain NCIMB 400).